A 471-amino-acid chain; its full sequence is 6-phosphogluconate dehydrogenase, decarboxylating (471 aa).

Residues 10-15 (GLAVMG), 33-35 (NRT), 75-77 (VKA), and asparagine 103 contribute to the NADP(+) site. Residues asparagine 103 and 129–131 (SGG) each bind substrate. The Proton acceptor role is filled by lysine 183. 186 to 187 (HN) contacts substrate. The active-site Proton donor is glutamate 190. Positions 191, 263, 290, 449, and 455 each coordinate substrate.

The protein belongs to the 6-phosphogluconate dehydrogenase family. Homodimer.

It catalyses the reaction 6-phospho-D-gluconate + NADP(+) = D-ribulose 5-phosphate + CO2 + NADPH. The protein operates within carbohydrate degradation; pentose phosphate pathway; D-ribulose 5-phosphate from D-glucose 6-phosphate (oxidative stage): step 3/3. Catalyzes the oxidative decarboxylation of 6-phosphogluconate to ribulose 5-phosphate and CO(2), with concomitant reduction of NADP to NADPH. The protein is 6-phosphogluconate dehydrogenase, decarboxylating (gnd) of Synechococcus elongatus (strain ATCC 33912 / PCC 7942 / FACHB-805) (Anacystis nidulans R2).